A 179-amino-acid chain; its full sequence is Large ribosomal subunit protein bL25 (179 aa).

Belongs to the bacterial ribosomal protein bL25 family. CTC subfamily. As to quaternary structure, part of the 50S ribosomal subunit; part of the 5S rRNA/L5/L18/L25 subcomplex. Contacts the 5S rRNA. Binds to the 5S rRNA independently of L5 and L18.

In terms of biological role, this is one of the proteins that binds to the 5S RNA in the ribosome where it forms part of the central protuberance. This is Large ribosomal subunit protein bL25 from Desulfitobacterium hafniense (strain DSM 10664 / DCB-2).